We begin with the raw amino-acid sequence, 206 residues long: uncharacterized protein (206 aa).

This is an uncharacterized protein from Mycoplasma pneumoniae (strain ATCC 29342 / M129 / Subtype 1) (Mycoplasmoides pneumoniae).